The following is a 120-amino-acid chain: Ribosome-binding factor A (120 aa).

The protein belongs to the RbfA family. Monomer. Binds 30S ribosomal subunits, but not 50S ribosomal subunits or 70S ribosomes.

Its subcellular location is the cytoplasm. Functionally, one of several proteins that assist in the late maturation steps of the functional core of the 30S ribosomal subunit. Associates with free 30S ribosomal subunits (but not with 30S subunits that are part of 70S ribosomes or polysomes). Required for efficient processing of 16S rRNA. May interact with the 5'-terminal helix region of 16S rRNA. This chain is Ribosome-binding factor A, found in Rickettsia rickettsii (strain Iowa).